We begin with the raw amino-acid sequence, 501 residues long: Phosphoethanolamine N-methyltransferase 1 (501 aa).

6 residues coordinate S-adenosyl-L-homocysteine: Gly-72, Arg-77, Asp-93, Asp-118, Val-119, and Asn-137. Phosphocholine contacts are provided by Ser-170, Thr-175, Gly-176, Arg-180, and Tyr-187. Residues Gln-256–Tyr-257 and Tyr-265 contribute to the N-methylethanolamine phosphate site. Tyr-265 contributes to the phosphocholine binding site. Residues Val-274, Ser-275, Gly-301, Asp-323, Asp-349, Cys-350, and Arg-366 each contribute to the S-adenosyl-L-homocysteine site. Phosphocholine contacts are provided by Tyr-397, Tyr-411, Arg-415, Tyr-417, and Lys-483. N-methylethanolamine phosphate contacts are provided by residues Tyr-397, Tyr-411, Arg-415 to Tyr-417, and Lys-483.

Belongs to the class I-like SAM-binding methyltransferase superfamily. PEAMT family.

The catalysed reaction is phosphoethanolamine + S-adenosyl-L-methionine = N-methylethanolamine phosphate + S-adenosyl-L-homocysteine + H(+). The enzyme catalyses N-methylethanolamine phosphate + S-adenosyl-L-methionine = N,N-dimethylethanolamine phosphate + S-adenosyl-L-homocysteine + H(+). It carries out the reaction N,N-dimethylethanolamine phosphate + S-adenosyl-L-methionine = phosphocholine + S-adenosyl-L-homocysteine + H(+). It functions in the pathway phospholipid metabolism; phosphatidylcholine biosynthesis; phosphocholine from phosphoethanolamine: step 1/1. Involved in phosphocholine biosynthesis. Catalyzes the N-methylation of phosphoethanolamine, phosphomonomethylethanolamine and phosphodimethylethanolamine, the three methylation steps required to convert phosphoethanolamine to phosphocholine (PC). May be involved in root development. The polypeptide is Phosphoethanolamine N-methyltransferase 1 (Zea mays (Maize)).